The primary structure comprises 759 residues: TIR domain-containing adapter molecule 1 (759 aa).

The TRIF-NTD stretch occupies residues 1–153 (MACTGPSLSG…CGWDVLGDLG (153 aa)). The TRAF6-binding motif lies at 84-91 (ETPEEPPD). Positions 207-210 (LEIS) match the pLxIS motif motif. At Ser-210 the chain carries Phosphoserine. Lys-229 participates in a covalent cross-link: Glycyl lysine isopeptide (Lys-Gly) (interchain with G-Cter in ubiquitin). The segment at 241–296 (EPAPMGCQEPEEMSWPPSVEAADSPVRPSSPGPGLPEVTTDACPASPHDPPEVPEI) is disordered. 2 consecutive short sequence motifs (TRAF6-binding) follow at residues 248-255 (QEPEEMSW) and 299-309 (HYPVECTDVPA). Residues 340 to 426 (LSAQPRPPTP…PEPPPPELES (87 aa)) are disordered. Residues 351 to 365 (VPQTSPSFPSASTSP) show a composition bias toward low complexity. The segment covering 366–376 (FPSPSTPPEAH) has biased composition (pro residues). The TIR domain maps to 430-590 (KFYNFVVLHA…QDARALREQS (161 aa)). The tract at residues 549-759 (LLDEHSKIFA…APEDNTRETE (211 aa)) is sufficient to induce apoptosis. Residues 642 to 723 (GQGSLGTPPS…PPARPQSPGL (82 aa)) form a disordered region. Pro residues predominate over residues 659–705 (HQPPPLPPWLGGTPPPIFPQPPQTFPQPPPTFPQPPPTFQQPPPACP).

Homodimer. Found in a multi-helicase-TICAM1 complex at least composed of DHX36, DDX1, DDX21 and TICAM1; this complex exists in resting cells with or without poly(I:C) RNA ligand stimulation. Interacts (via TIR domain) with DDX21 (via C-terminus). Interacts (via TIR domain) with DHX36 (via C-terminus). Interacts with AZI2 and IRF7. Interacts with TICAM2 in TLR4 recruitment. Interaction with PIAS4 inhibits the TICAM1-induced NF-kappa-B, IRF and IFNB1 activation. Interacts with IKBKB and IKBKE. Interaction with SARM1 blocks TICAM1-dependent transcription factor activation. Interacts with TRAF3. Interacts (when phosphorylated) with IRF3; following activation and phosphorylation on the pLxIS motif by TBK1, recruits IRF3. Interacts with TBK1, TRAF6 and RIPK1 and these interactions are enhanced in the presence of WDFY1. Interacts with TRAFD1. Interacts with UBQLN1 (via UBA domain). Interacts with TLR4 in response to LPS in a WDFY1-dependent manner. Interacts with WDFY1 in response to poly(I:C). Interacts (via the TIR domain) with TLR3 in response to poly(I:C) and this interaction is enhanced in the presence of WDFY1. Interacts with TRIM56. Component of a multi-helicase-TICAM1 complex that acts as a cytoplasmic sensor of viral double-stranded RNA (dsRNA) and plays a role in the activation of a cascade of antiviral responses including the induction of pro-inflammatory cytokines. Interacts (via the TIR domain) with TLR5. Interacts with TRIM8. Interacts with TAX1BP1 and TRIM32; these interactions target TICAM1 to TAX1BP1-mediated selective autophagic degradation. Interacts with DDX50. Phosphorylated by TBK1. Following activation, phosphorylated by TBK1 at Ser-210 in the pLxIS motif. The phosphorylated pLxIS motif constitutes an IRF3-binding motif, leading to recruitment of the transcription factor IRF3 to induce type-I interferons and other cytokines. In terms of processing, polyubiquitinated at Lys-229 by TRIM38 with 'Lys-48'-linked chains, leading to proteasomal degradation. Polyubiquitinated with 'Lys-6' and 'Lys-33'-linked chains in a TRIM8-dependent manner.

The protein localises to the cytoplasmic vesicle. It localises to the autophagosome. The protein resides in the cytoplasm. Its subcellular location is the cytosol. It is found in the mitochondrion. In terms of biological role, involved in innate immunity against invading pathogens. Adapter used by TLR3, TLR4 (through TICAM2) and TLR5 to mediate NF-kappa-B and interferon-regulatory factor (IRF) activation, and to induce apoptosis. Ligand binding to these receptors results in TRIF recruitment through its TIR domain. Distinct protein-interaction motifs allow recruitment of the effector proteins TBK1, TRAF6 and RIPK1, which in turn, lead to the activation of transcription factors IRF3 and IRF7, NF-kappa-B and FADD respectively. Phosphorylation by TBK1 on the pLxIS motif leads to recruitment and subsequent activation of the transcription factor IRF3 to induce expression of type I interferon and exert a potent immunity against invading pathogens. Component of a multi-helicase-TICAM1 complex that acts as a cytoplasmic sensor of viral double-stranded RNA (dsRNA) and plays a role in the activation of a cascade of antiviral responses including the induction of pro-inflammatory cytokines. The chain is TIR domain-containing adapter molecule 1 (TICAM1) from Bos taurus (Bovine).